Consider the following 354-residue polypeptide: Probable RNA methyltransferase AZOSEA28700 (354 aa).

The active-site Proton acceptor is the glutamate 88. In terms of domain architecture, Radical SAM core spans 91 to 317; sequence LLPRDGLCVS…TKLRHSAGQD (227 aa). A disulfide bridge links cysteine 98 with cysteine 322. [4Fe-4S] cluster is bound by residues cysteine 105, cysteine 109, and cysteine 112. S-adenosyl-L-methionine is bound by residues 150–151, serine 180, 203–205, and asparagine 279; these read GE and SLH. Cysteine 322 functions as the S-methylcysteine intermediate in the catalytic mechanism.

The protein belongs to the radical SAM superfamily. RlmN family. The cofactor is [4Fe-4S] cluster.

It is found in the cytoplasm. The protein is Probable RNA methyltransferase AZOSEA28700 of Aromatoleum aromaticum (strain DSM 19018 / LMG 30748 / EbN1) (Azoarcus sp. (strain EbN1)).